Reading from the N-terminus, the 875-residue chain is Probable inorganic carbon transporter subunit DabA (875 aa).

The Zn(2+) site is built by C399, D401, H581, and C596.

It belongs to the inorganic carbon transporter (TC 9.A.2) DabA family. In terms of assembly, forms a complex with DabB. It depends on Zn(2+) as a cofactor.

It is found in the cell membrane. Functionally, part of an energy-coupled inorganic carbon pump. In Bacillus thuringiensis (strain Al Hakam), this protein is Probable inorganic carbon transporter subunit DabA.